Here is a 256-residue protein sequence, read N- to C-terminus: Probable aquaporin TIP4-2 (256 aa).

The next 5 membrane-spanning stretches (helical) occupy residues 25–45 (AVAGELLFTFLFVFIGVASTI), 59–79 (AVTAAAMAQALVVAVLATAGF), 86–108 (LNPAVTLSLAVGGHITLFRSALY), 146–166 (GVAAEAVFTFTLLLVICATIL), and 178–198 (PLLTGLLVGANTVAGGALTGA). The short motif at 87–89 (NPA) is the NPA 1 element. An NPA 2 motif is present at residues 201–203 (NPA). A helical transmembrane segment spans residues 220–240 (VYWVGPLAGGPLAVVAYELLF).

It belongs to the MIP/aquaporin (TC 1.A.8) family. TIP (TC 1.A.8.10) subfamily. As to expression, expressed in roots, leaves and anthers.

The protein localises to the vacuole membrane. In terms of biological role, aquaporins facilitate the transport of water and small neutral solutes across cell membranes. May be involved in transport from the vacuolar compartment to the cytoplasm. The polypeptide is Probable aquaporin TIP4-2 (TIP4-2) (Oryza sativa subsp. japonica (Rice)).